The chain runs to 191 residues: Calcium-activated potassium channel subunit beta-1 (191 aa).

At 1–18 (MGKKLVMAQKRGETRALC) the chain is on the cytoplasmic side. A helical membrane pass occupies residues 19–39 (LGVAMVVCAAITYYVLGTTVL). Topologically, residues 40–155 (PLYQKSVWTQ…VVYQRLYGPQ (116 aa)) are extracellular. N-linked (GlcNAc...) asparagine glycans are attached at residues Asn80 and Asn142. Residues 156–176 (VLLFSFFWPTFLLTGGLLLIA) traverse the membrane as a helical segment. Over 177–191 (MVKLNRSLSILAAQK) the chain is Cytoplasmic.

The protein belongs to the KCNMB (TC 8.A.14.1) family. KCNMB1 subfamily. In terms of assembly, interacts with KCNMA1 tetramer. There are probably 4 molecules of KCMNB1 per KCNMA1 tetramer. Post-translationally, N-glycosylated. Expressed in many tissues containing smooth muscles. In brain and heart, it is not expressed except in the vasculature, such as cerebral arteries, aorta and corona arteries.

The protein localises to the membrane. Regulatory subunit of the calcium activated potassium KCNMA1 (maxiK) channel. Modulates the calcium sensitivity and gating kinetics of KCNMA1, thereby contributing to KCNMA1 channel diversity. Increases the apparent Ca(2+)/voltage sensitivity of the KCNMA1 channel. It also modifies KCNMA1 channel kinetics and alters its pharmacological properties. It slows down the activation and the deactivation kinetics of the channel. Acts as a negative regulator of smooth muscle contraction by enhancing the calcium sensitivity to KCNMA1. Its presence is also a requirement for internal binding of the KCNMA1 channel opener dehydrosoyasaponin I (DHS-1) triterpene glycoside and for external binding of the agonist hormone 17-beta-estradiol (E2). Increases the binding activity of charybdotoxin (CTX) toxin to KCNMA1 peptide blocker by increasing the CTX association rate and decreasing the dissociation rate. This is Calcium-activated potassium channel subunit beta-1 (Kcnmb1) from Mus musculus (Mouse).